The chain runs to 207 residues: Large ribosomal subunit protein uL4 (207 aa).

Residues 49-79 (HKVKSRGEVSGGGKKPWRQKGTGRARAGTSR) form a disordered region.

It belongs to the universal ribosomal protein uL4 family. In terms of assembly, part of the 50S ribosomal subunit.

In terms of biological role, one of the primary rRNA binding proteins, this protein initially binds near the 5'-end of the 23S rRNA. It is important during the early stages of 50S assembly. It makes multiple contacts with different domains of the 23S rRNA in the assembled 50S subunit and ribosome. Its function is as follows. Forms part of the polypeptide exit tunnel. The polypeptide is Large ribosomal subunit protein uL4 (Heliobacterium modesticaldum (strain ATCC 51547 / Ice1)).